Consider the following 639-residue polypeptide: PTS-dependent dihydroxyacetone kinase operon regulatory protein (639 aa).

Positions M1–G318 are sensor domain. Residues A52 to L189 form the GAF domain. In terms of domain architecture, PAS spans N203–A265. Positions M327–L552 constitute a Sigma-54 factor interaction domain. Residues G355–A362 and A415–K424 contribute to the ATP site.

As to quaternary structure, homodimer. DhaR forms complexes with DhaK and DhaL-ADP.

Its function is as follows. Positively regulates the dhaKLM operon from a sigma-70 promoter. Represses its own expression. The polypeptide is PTS-dependent dihydroxyacetone kinase operon regulatory protein (Escherichia coli (strain K12)).